A 222-amino-acid chain; its full sequence is THAP domain-containing protein 6 (222 aa).

The THAP-type zinc-finger motif lies at 1-89; the sequence is MVKCCSAIGC…LKPGVIPSIF (89 aa). An HCFC1-binding motif (HBM) motif is present at residues 139–142; it reads EHSY. Positions 149–194 form a coiled coil; the sequence is KKLKHKLDHVIGELEDTKESLRNVLDREKRFQKSLRKTIRELKDEC.

The protein is THAP domain-containing protein 6 (THAP6) of Homo sapiens (Human).